A 113-amino-acid chain; its full sequence is N-alpha-acetyltransferase 38, NatC auxiliary subunit (113 aa).

Residues 1 to 29 (MAAVLEENGCSRQSSPGAGDSDAEAGDTA) form a disordered region. The region spanning 28-106 (TARHKLESLL…IVSIQVELES (79 aa)) is the Sm domain.

Belongs to the snRNP Sm proteins family. As to quaternary structure, component of the N-terminal acetyltransferase C (NatC) complex.

The protein localises to the cytoplasm. The protein resides in the nucleus. In terms of biological role, auxillary component of the N-terminal acetyltransferase C (NatC) complex which catalyzes acetylation of N-terminal methionine residues. N-terminal acetylation protects proteins from ubiquitination and degradation by the N-end rule pathway. This is N-alpha-acetyltransferase 38, NatC auxiliary subunit (naa38) from Xenopus tropicalis (Western clawed frog).